A 442-amino-acid chain; its full sequence is D-serine dehydratase (442 aa).

An N6-(pyridoxal phosphate)lysine modification is found at Lys-118.

The protein belongs to the serine/threonine dehydratase family. DsdA subfamily. In terms of assembly, monomer. The cofactor is pyridoxal 5'-phosphate.

The enzyme catalyses D-serine = pyruvate + NH4(+). The sequence is that of D-serine dehydratase from Shigella flexneri.